The following is a 358-amino-acid chain: Protein ttm-2 (358 aa).

It belongs to the arrestin family.

Functionally, involved in resistance to B.thuringiensis pore-forming toxin Cry5B downstream of the sek-1 and pmk-1 MAPK kinase pathway. In Caenorhabditis elegans, this protein is Protein ttm-2.